The chain runs to 274 residues: NAD-dependent protein deacylase (274 aa).

Residues 4–274 (CLLPSSDMDA…GELLPKALAP (271 aa)) form the Deacetylase sirtuin-type domain. Residue 29–48 (GAGVSAESGVPTFRGAGGLW) coordinates NAD(+). Substrate contacts are provided by Tyr-73 and Arg-76. Residue 111-114 (QNID) coordinates NAD(+). His-129 (proton acceptor) is an active-site residue. Residues Cys-137, Cys-140, Cys-178, and Cys-183 each contribute to the Zn(2+) site. NAD(+) is bound by residues 220–222 (GTS), 246–248 (NME), and Cys-264.

This sequence belongs to the sirtuin family. Class III subfamily. Zn(2+) serves as cofactor.

It localises to the mitochondrion. The catalysed reaction is N(6)-malonyl-L-lysyl-[protein] + NAD(+) + H2O = 2''-O-malonyl-ADP-D-ribose + nicotinamide + L-lysyl-[protein]. It catalyses the reaction N(6)-succinyl-L-lysyl-[protein] + NAD(+) + H2O = 2''-O-succinyl-ADP-D-ribose + nicotinamide + L-lysyl-[protein]. It carries out the reaction N(6)-glutaryl-L-lysyl-[protein] + NAD(+) + H2O = 2''-O-glutaryl-ADP-D-ribose + nicotinamide + L-lysyl-[protein]. Functionally, NAD-dependent lysine demalonylase, desuccinylase and deglutarylase that specifically removes malonyl, succinyl and glutaryl groups on target proteins. Has weak NAD-dependent protein deacetylase activity; however this activity may not be physiologically relevant in vivo. This is NAD-dependent protein deacylase from Daphnia pulex (Water flea).